We begin with the raw amino-acid sequence, 312 residues long: Eukaryotic translation initiation factor 2 subunit 2 (312 aa).

Disordered regions lie at residues Ala-26 to Met-104 and Ala-125 to Trp-146. At Ser-44 the chain carries Phosphoserine. 2 stretches are compositionally biased toward acidic residues: residues Ala-90–Leu-102 and Ala-125–Asn-142. Ser-133 is subject to Phosphoserine. Residue Thr-145 is modified to Phosphothreonine. The segment at Cys-260–Cys-284 adopts a C4-type zinc-finger fold.

It belongs to the eIF-2-beta/eIF-5 family. In terms of assembly, eukaryotic translation initiation factor 2 eIF2 is a heterotrimeric complex composed of an alpha, a beta and a gamma subunit.

The protein localises to the cytoplasm. It is found in the cytosol. In terms of biological role, component of the eIF2 complex that functions in the early steps of protein synthesis by forming a ternary complex with GTP and initiator tRNA. This complex binds to a 40S ribosomal subunit, followed by mRNA binding to form a 43S pre-initiation complex (43S PIC). Junction of the 60S ribosomal subunit to form the 80S initiation complex is preceded by hydrolysis of the GTP bound to eIF2 and release of an eIF2-GDP binary complex. In order for eIF2 to recycle and catalyze another round of initiation, the GDP bound to eIF2 must exchange with GTP by way of a reaction catalyzed by eIF2B. The polypeptide is Eukaryotic translation initiation factor 2 subunit 2 (Drosophila melanogaster (Fruit fly)).